Here is a 318-residue protein sequence, read N- to C-terminus: MKHAENEYLNLCRHVMEHGTKKEDRTGTGTVSVFGYQMRFDLSKGFPLLTTKRVPFRLVASELLWFMKGDTNIRYLLQHNNNIWNEWAFKSWVESDEYTGPDMTDFGLRSQQDEEFKVQYDKQMELFKKNVLEDDDFSNKYGYLGDVYGKQWRAWKTTAGETLDQLKDVIEMIKKTPDSRRLIVSAWNPEDVPSMALPPCHTLFQFYVADGKLSCQLYQRSGDIFLGIPFNIASYSLLTHLIAHECGLEVGEFVHTIGDAHIYTNHFEQVEKQLAREPRPFPKLTLNPDVKSVFDFEMEDLTIEGYDPHPAIKAPVAV.

Residues Arg-25 and 180–181 (RR) contribute to the dUMP site. Cys-200 acts as the Nucleophile in catalysis. DUMP contacts are provided by residues 220-223 (RSGD), Asn-231, and 261-263 (HIY). Asp-223 provides a ligand contact to (6R)-5,10-methylene-5,6,7,8-tetrahydrofolate. Ala-317 serves as a coordination point for (6R)-5,10-methylene-5,6,7,8-tetrahydrofolate.

Belongs to the thymidylate synthase family. Bacterial-type ThyA subfamily. In terms of assembly, homodimer.

The protein resides in the cytoplasm. The enzyme catalyses dUMP + (6R)-5,10-methylene-5,6,7,8-tetrahydrofolate = 7,8-dihydrofolate + dTMP. Its pathway is pyrimidine metabolism; dTTP biosynthesis. Functionally, catalyzes the reductive methylation of 2'-deoxyuridine-5'-monophosphate (dUMP) to 2'-deoxythymidine-5'-monophosphate (dTMP) while utilizing 5,10-methylenetetrahydrofolate (mTHF) as the methyl donor and reductant in the reaction, yielding dihydrofolate (DHF) as a by-product. This enzymatic reaction provides an intracellular de novo source of dTMP, an essential precursor for DNA biosynthesis. The polypeptide is Thymidylate synthase (Bacillus cereus (strain ZK / E33L)).